Reading from the N-terminus, the 91-residue chain is Large ribosomal subunit protein bL27 (91 aa).

Positions 1–21 (MAHKKSGGSSRNGRDSAGRRL) are disordered.

This sequence belongs to the bacterial ribosomal protein bL27 family.

The polypeptide is Large ribosomal subunit protein bL27 (Phenylobacterium zucineum (strain HLK1)).